A 227-amino-acid polypeptide reads, in one-letter code: ATP-dependent dethiobiotin synthetase BioD (227 aa).

Residue 13–18 (DAGKTT) coordinates ATP. Position 17 (Thr17) interacts with Mg(2+). Residue Lys38 is part of the active site. ATP-binding positions include Asp55, 118–121 (EGAG), 178–179 (NR), 207–209 (PYI), and Glu214. Mg(2+) contacts are provided by Asp55 and Glu118.

This sequence belongs to the dethiobiotin synthetase family. As to quaternary structure, homodimer. Requires Mg(2+) as cofactor.

It localises to the cytoplasm. The catalysed reaction is (7R,8S)-7,8-diammoniononanoate + CO2 + ATP = (4R,5S)-dethiobiotin + ADP + phosphate + 3 H(+). It participates in cofactor biosynthesis; biotin biosynthesis; biotin from 7,8-diaminononanoate: step 1/2. In terms of biological role, catalyzes a mechanistically unusual reaction, the ATP-dependent insertion of CO2 between the N7 and N8 nitrogen atoms of 7,8-diaminopelargonic acid (DAPA, also called 7,8-diammoniononanoate) to form a ureido ring. The sequence is that of ATP-dependent dethiobiotin synthetase BioD from Tolumonas auensis (strain DSM 9187 / NBRC 110442 / TA 4).